We begin with the raw amino-acid sequence, 35 residues long: Defensin-B (35 aa).

Disulfide bonds link Cys-4-Cys-25, Cys-10-Cys-33, and Cys-14-Cys-35.

It localises to the secreted. Its function is as follows. Has antibacterial activity against M.luteus and E.coli. The polypeptide is Defensin-B (Mytilus edulis (Blue mussel)).